Reading from the N-terminus, the 396-residue chain is MTVYTASVTAPVNIATLKYWGKRDTKLNLPTNSSISVTLSQDDLRTLTSAATAPEFERDTLWLNGEPHSIDNERTQNCLRDLRQLRKEMESKDASLPTLSQWKLHIVSENNFPTAAGLASSAAGFAALVSAIAKLYQLPQSTSEISRIARKGSGSACRSLFGGYVAWEMGKAEDGHDSMAVQIADSSDWPQMKACVLVVSDIKKDVSSTQGMQLTVATSELFKERIEHVVPKRFEVMRKAIVEKDFATFAKETMMDSNSFHATCLDSFPPIFYMNDTSKRIISWCHTINQFYGETIVAYTFDAGPNAVLYYLAENESKLFAFIYKLFGSVPGWDKKFTTEQLEAFNHQFESSNFTARELDLELQKDVARVILTQVGSGPQETNESLIDAKTGLPKE.

(R)-5-diphosphomevalonate-binding positions include 19 to 22 (YWGK), Arg-74, 153 to 158 (SGSACR), and Thr-209.

Belongs to the diphosphomevalonate decarboxylase family. As to quaternary structure, homodimer.

It catalyses the reaction (R)-5-diphosphomevalonate + ATP = isopentenyl diphosphate + ADP + phosphate + CO2. Its pathway is isoprenoid biosynthesis; isopentenyl diphosphate biosynthesis via mevalonate pathway; isopentenyl diphosphate from (R)-mevalonate: step 3/3. In terms of biological role, diphosphomevalonate decarboxylase; part of the second module of ergosterol biosynthesis pathway that includes the middle steps of the pathway. MVD1/ERG19 converts diphosphomevalonate into isopentenyl diphosphate. The second module is carried out in the vacuole and involves the formation of farnesyl diphosphate, which is also an important intermediate in the biosynthesis of ubiquinone, dolichol, heme and prenylated proteins. Activity by the mevalonate kinase ERG12 first converts mevalonate into 5-phosphomevalonate. 5-phosphomevalonate is then further converted to 5-diphosphomevalonate by the phosphomevalonate kinase ERG8. The diphosphomevalonate decarboxylase MVD1/ERG19 then produces isopentenyl diphosphate. The isopentenyl-diphosphate delta-isomerase IDI1 then catalyzes the 1,3-allylic rearrangement of the homoallylic substrate isopentenyl (IPP) to its highly electrophilic allylic isomer, dimethylallyl diphosphate (DMAPP). Finally the farnesyl diphosphate synthase ERG20 catalyzes the sequential condensation of isopentenyl pyrophosphate with dimethylallyl pyrophosphate, and then with the resultant geranylpyrophosphate to the ultimate product farnesyl pyrophosphate. The polypeptide is Diphosphomevalonate decarboxylase (Saccharomyces cerevisiae (strain ATCC 204508 / S288c) (Baker's yeast)).